The sequence spans 202 residues: ATP-dependent Clp protease proteolytic subunit (202 aa).

Residue Ser101 is the Nucleophile of the active site. The active site involves His126.

Belongs to the peptidase S14 family. Component of the chloroplastic Clp protease core complex.

Its subcellular location is the plastid. The protein resides in the chloroplast stroma. It catalyses the reaction Hydrolysis of proteins to small peptides in the presence of ATP and magnesium. alpha-casein is the usual test substrate. In the absence of ATP, only oligopeptides shorter than five residues are hydrolyzed (such as succinyl-Leu-Tyr-|-NHMec, and Leu-Tyr-Leu-|-Tyr-Trp, in which cleavage of the -Tyr-|-Leu- and -Tyr-|-Trp bonds also occurs).. Functionally, cleaves peptides in various proteins in a process that requires ATP hydrolysis. Has a chymotrypsin-like activity. Plays a major role in the degradation of misfolded proteins. The chain is ATP-dependent Clp protease proteolytic subunit from Liriodendron tulipifera (Tuliptree).